We begin with the raw amino-acid sequence, 198 residues long: Holliday junction resolvase RecU (198 aa).

The tract at residues 1–22 (MVNYPHKVSSQKRQTSLSQPKN) is disordered. The span at 11–22 (QKRQTSLSQPKN) shows a compositional bias: polar residues. 4 residues coordinate Mg(2+): threonine 81, aspartate 83, glutamate 96, and glutamine 115.

The protein belongs to the RecU family. Mg(2+) serves as cofactor.

The protein resides in the cytoplasm. It catalyses the reaction Endonucleolytic cleavage at a junction such as a reciprocal single-stranded crossover between two homologous DNA duplexes (Holliday junction).. Functionally, endonuclease that resolves Holliday junction intermediates in genetic recombination. Cleaves mobile four-strand junctions by introducing symmetrical nicks in paired strands. Promotes annealing of linear ssDNA with homologous dsDNA. Required for DNA repair, homologous recombination and chromosome segregation. This chain is Holliday junction resolvase RecU, found in Streptococcus pneumoniae serotype 2 (strain D39 / NCTC 7466).